The primary structure comprises 387 residues: Fiber protein 2 (387 aa).

It belongs to the adenoviridae fiber family. Homotrimer. Interacts with host receptor CXCAR. Interacts (via N-terminal tail region) with pentons.

The protein resides in the virion. It is found in the host nucleus. Forms spikes that protrude from each vertex of the icosahedral capsid. Interacts with host receptor CXCAR to provide virion initial attachment to target cell. Fiber proteins are shed during virus entry, when virus is still at the cell surface. In Homo sapiens (Human), this protein is Fiber protein 2.